A 70-amino-acid polypeptide reads, in one-letter code: Mu-conotoxin PnIVB (70 aa).

The signal sequence occupies residues 1–20 (MMSKLGVLLIICLLLCPLTA). The propeptide occupies 21-51 (VPQDGDQPADQPAERMQDDISSEHHPFFDPV).

Post-translationally, contains 3 disulfide bonds. They are not added, since framework IV presents two different connectivities (I-V, II-III, IV-VI and I-III, II-V, IV-VI). As to expression, expressed by the venom duct.

It is found in the secreted. In terms of biological role, mu-conotoxins block voltage-gated sodium channels (Nav). Blocks reversibly sodium channels in molluskan neurons, but has no effect on sodium currents in bovine chromaffin cells or in rat brain synaptosomes. Induces paralysis in bivalve mollusks (Mytilus). No effect are observed on fish (Gambusia) and fly larvae (Sarcophaga). Is approximately 6 times more potent than PnIVA in blockade of the sodium current in Lymnaea neurons. The chain is Mu-conotoxin PnIVB from Conus pennaceus (Feathered cone).